We begin with the raw amino-acid sequence, 515 residues long: Maturase K (515 aa).

Belongs to the intron maturase 2 family. MatK subfamily.

The protein localises to the plastid. It is found in the chloroplast. Its function is as follows. Usually encoded in the trnK tRNA gene intron. Probably assists in splicing its own and other chloroplast group II introns. This is Maturase K from Alpinia calcarata (Snap ginger).